Consider the following 62-residue polypeptide: Sperm protamine P1 (62 aa).

The segment at 1–62 is disordered; the sequence is MARYRHSRSR…RYSRRRRRRY (62 aa).

It belongs to the protamine P1 family. In terms of tissue distribution, testis.

The protein localises to the nucleus. It is found in the chromosome. In terms of biological role, protamines substitute for histones in the chromatin of sperm during the haploid phase of spermatogenesis. They compact sperm DNA into a highly condensed, stable and inactive complex. The sequence is that of Sperm protamine P1 (PRM1) from Notamacropus eugenii (Tammar wallaby).